Consider the following 212-residue polypeptide: Ribosomal RNA small subunit methyltransferase G (212 aa).

S-adenosyl-L-methionine contacts are provided by residues glycine 80, leucine 85, 131-132 (AE), and arginine 146.

It belongs to the methyltransferase superfamily. RNA methyltransferase RsmG family.

Its subcellular location is the cytoplasm. It carries out the reaction guanosine(527) in 16S rRNA + S-adenosyl-L-methionine = N(7)-methylguanosine(527) in 16S rRNA + S-adenosyl-L-homocysteine. Its function is as follows. Specifically methylates the N7 position of guanine in position 527 of 16S rRNA. In Stenotrophomonas maltophilia (strain R551-3), this protein is Ribosomal RNA small subunit methyltransferase G.